The following is a 320-amino-acid chain: Iminosuccinate reductase (320 aa).

The active-site Proton donor/acceptor is the Lys-67. Residues Arg-110, 137-138 (HQ), Asn-159, Ser-199, 219-222 (MGTD), Lys-226, and Gly-291 each bind NAD(+).

This sequence belongs to the ornithine cyclodeaminase/mu-crystallin family. BhcD subfamily.

The enzyme catalyses L-aspartate + NAD(+) = iminosuccinate + NADH + H(+). Imine reductase that catalyzes the NADH-dependent reduction of iminosuccinate to L-aspartate. Is essential for the growth of P.denitrificans in the presence of glycolate and glyoxylate since it functions in glyoxylate assimilation via the beta-hydroxyaspartate cycle (BHAC). Thereby BhcD regenerates the amino group donor for the first step of the BHAC. In Paracoccus denitrificans (strain Pd 1222), this protein is Iminosuccinate reductase.